We begin with the raw amino-acid sequence, 95 residues long: Costars family protein WS02710_H03 (95 aa).

This sequence belongs to the costars family.

The protein is Costars family protein WS02710_H03 of Picea sitchensis (Sitka spruce).